Consider the following 307-residue polypeptide: DDRGK domain-containing protein 1 (307 aa).

Residues 1-2 (MD) lie on the Lumenal side of the membrane. The chain crosses the membrane as a helical span at residues 3-23 (LILLVGIAVALLVILATLYFL). At 24-307 (QNKNKAAGEA…PVQSAAGGDS (284 aa)) the chain is on the cytoplasmic side. 2 stretches are compositionally biased toward low complexity: residues 32-43 (EAKPAAAAPRRG) and 54-83 (RRAQ…PAAA). Residues 32–162 (EAKPAAAAPR…EEVEAEAERK (131 aa)) form a disordered region. Basic and acidic residues predominate over residues 117 to 162 (KMEAKEQKRLQREHELQEREKRKVKEAKEDAERKQQEEVEAEAERK).

It belongs to the DDRGK1 family. In terms of assembly, interacts with Atg9; the interaction is transient.

The protein resides in the endoplasmic reticulum membrane. In terms of biological role, substrate adapter for ufmylation, the covalent attachment of the ubiquitin-like modifier UFM1 to substrate proteins. Required for ufmylation of Atg9; protects the nervous system during aging, possibly by stabilizing Atg9 and supporting its function. This Drosophila willistoni (Fruit fly) protein is DDRGK domain-containing protein 1.